The sequence spans 450 residues: Involucrin (450 aa).

Positions 1–19 (MSQQHTLPVTLPPTLSQEL) are enriched in polar residues. Disordered regions lie at residues 1-43 (MSQQ…LPAP), 77-370 (QLQQ…EQLK), and 422-450 (PGQV…EPEV). Residues 86-108 (QEVHLAKHQELQELQEQELHLGK) are compositionally biased toward basic and acidic residues. Residues 120–135 (GKQQQQQESQEQELYL) are compositionally biased toward low complexity. Composition is skewed to basic and acidic residues over residues 187 to 200 (LGKR…ELHL) and 264 to 281 (QELH…ELHL). Positions 295 to 344 (GEAAAAGVTGAGPAASKAARRATGAGTAPGKAAAAAGATGAGTAATAPAT) are enriched in low complexity. A compositionally biased stretch (basic and acidic residues) spans 345–370 (AEERQKAESLEQQLEQEKAQREEQLK).

The protein belongs to the involucrin family. As to quaternary structure, directly or indirectly cross-linked to cornifelin (CNFN). In terms of processing, substrate of transglutaminase. Specific glutamines or lysines are cross-linked to keratins, desmoplakin and to inter involucrin molecules. Keratinocytes of epidermis and other stratified squamous epithelia.

It localises to the cytoplasm. Functionally, part of the insoluble cornified cell envelope (CE) of stratified squamous epithelia. The polypeptide is Involucrin (IVL) (Lemur catta (Ring-tailed lemur)).